The sequence spans 376 residues: tRNA-specific 2-thiouridylase MnmA (376 aa).

ATP contacts are provided by residues 17–24 (GMSGGVDS) and Met43. The interval 103-105 (NPD) is interaction with target base in tRNA. The Nucleophile role is filled by Cys108. Cys108 and Cys204 are oxidised to a cystine. Residue Gly132 participates in ATP binding. Residues 154–156 (KDQ) form an interaction with tRNA region. Cys204 (cysteine persulfide intermediate) is an active-site residue. An interaction with tRNA region spans residues 316–317 (RY).

Belongs to the MnmA/TRMU family.

The protein resides in the cytoplasm. It carries out the reaction S-sulfanyl-L-cysteinyl-[protein] + uridine(34) in tRNA + AH2 + ATP = 2-thiouridine(34) in tRNA + L-cysteinyl-[protein] + A + AMP + diphosphate + H(+). In terms of biological role, catalyzes the 2-thiolation of uridine at the wobble position (U34) of tRNA, leading to the formation of s(2)U34. This Pseudomonas syringae pv. syringae (strain B728a) protein is tRNA-specific 2-thiouridylase MnmA.